The chain runs to 429 residues: Asparagine--tRNA ligase (429 aa).

This sequence belongs to the class-II aminoacyl-tRNA synthetase family. Homodimer.

The protein resides in the cytoplasm. It carries out the reaction tRNA(Asn) + L-asparagine + ATP = L-asparaginyl-tRNA(Asn) + AMP + diphosphate + H(+). The polypeptide is Asparagine--tRNA ligase (Desulforamulus reducens (strain ATCC BAA-1160 / DSM 100696 / MI-1) (Desulfotomaculum reducens)).